We begin with the raw amino-acid sequence, 291 residues long: MSDTTKPPMARKMGLTAERVHGERRVEDPSRSVMTPPKEELRANVKDLSFWYGEFQALHAVNLPIARNKVTALIGASGCGKSTLLRCFNRMHDLYPGNRYGGEIDLQPEGQNIIAPGIDPILIRLRIGMVFQKPNPFPKTIYENVASGLRIRGIRSRAVLDERVEVSLRQAALWDEVKDRLHQSAYGLSGGQQQRLCIARTLAPNPEIILFDEPTSALDPIATAKIEDLFTDLRDDYTIVIVTHNMQQAARISDYLAFMHLGKMIEFGPTDECFVKPKHAMTEEYITGRFG.

An ABC transporter domain is found at 43 to 286 (ANVKDLSFWY…PKHAMTEEYI (244 aa)). ATP is bound at residue 75-82 (GASGCGKS).

This sequence belongs to the ABC transporter superfamily. Phosphate importer (TC 3.A.1.7) family. As to quaternary structure, the complex is composed of two ATP-binding proteins (PstB), two transmembrane proteins (PstC and PstA) and a solute-binding protein (PstS).

The protein resides in the cell inner membrane. The catalysed reaction is phosphate(out) + ATP + H2O = ADP + 2 phosphate(in) + H(+). In terms of biological role, part of the ABC transporter complex PstSACB involved in phosphate import. Responsible for energy coupling to the transport system. This Alcaligenes faecalis protein is Phosphate import ATP-binding protein PstB.